The following is a 415-amino-acid chain: ATP-dependent RNA helicase RhlB (415 aa).

The Q motif motif lies at 9–37 (QRFSDLSLHPIVRDTLAKKGFDFCTPIQA). One can recognise a Helicase ATP-binding domain in the interval 40–218 (LPISLNGRDV…FEDMNDPEYI (179 aa)). Residue 53-60 (AQTGTGKT) participates in ATP binding. Positions 164 to 167 (DEAD) match the DEAD box motif. In terms of domain architecture, Helicase C-terminal spans 241–389 (DKMALLLTLM…VSQYETEALL (149 aa)).

Belongs to the DEAD box helicase family. RhlB subfamily. As to quaternary structure, component of the RNA degradosome, which is a multiprotein complex involved in RNA processing and mRNA degradation.

The protein resides in the cytoplasm. It catalyses the reaction ATP + H2O = ADP + phosphate + H(+). Its function is as follows. DEAD-box RNA helicase involved in RNA degradation. Has RNA-dependent ATPase activity and unwinds double-stranded RNA. The protein is ATP-dependent RNA helicase RhlB of Haemophilus influenzae (strain PittEE).